The following is a 429-amino-acid chain: Adenylosuccinate synthetase (429 aa).

Residues 12 to 18 (GDEGKGK) and 40 to 42 (GHT) contribute to the GTP site. Catalysis depends on Asp-13, which acts as the Proton acceptor. 2 residues coordinate Mg(2+): Asp-13 and Gly-40. IMP contacts are provided by residues 13–16 (DEGK), 38–41 (NAGH), Thr-129, Arg-143, Gln-223, Thr-238, and Arg-302. His-41 acts as the Proton donor in catalysis. Substrate is bound at residue 298–304 (TVTGRPR). GTP is bound by residues Arg-304, 330-332 (KLD), and 412-414 (STS).

Belongs to the adenylosuccinate synthetase family. As to quaternary structure, homodimer. The cofactor is Mg(2+).

The protein localises to the cytoplasm. It catalyses the reaction IMP + L-aspartate + GTP = N(6)-(1,2-dicarboxyethyl)-AMP + GDP + phosphate + 2 H(+). It functions in the pathway purine metabolism; AMP biosynthesis via de novo pathway; AMP from IMP: step 1/2. Functionally, plays an important role in the de novo pathway of purine nucleotide biosynthesis. Catalyzes the first committed step in the biosynthesis of AMP from IMP. The sequence is that of Adenylosuccinate synthetase from Gluconobacter oxydans (strain 621H) (Gluconobacter suboxydans).